Consider the following 2480-residue polypeptide: MKVTVDVEADSPFLKALQKAFPAFEVESQQVTPNDHANARAFSHLATKLIEQEVPANITILDVGSAPARRLMSDHSYHCICPMKSAEDPERLANYARKLAKTAGEVLDKNVSGKITDLQDVMATPDLESPTFCLHTDETCRTRAEVAVYQDVXXHAPTSLYHQAMKGVRTVYWIGFDTTPFMFEVVAGAYPTYSTNWADEQVLQARNIGLCATSLSEGHRGKISIMRKKRLRPSDRXMFSVGXTLYIESRRLLKSWHLPSVFHLKGKNSFTCRCDTIVSCEGYVVKKITMSPGTYGKTVGYAVTHHAEGFLMCKVTDTVRGERVSFPVCTYVPATICDQMTGILATDVTPEDAQKLLVGLNQRIVVNGRTQRNTNTMKNYLLPVVAQAFSKWAREAKADMEDEKPLGTRERTLTCCCLWAFKNHKTHTMYKRPDTQTIVKVPSTFDSFVIPSLWSSSLSIGIRQRIKLLLGPKLSRDLPYSGDRNEAREAEKEAEETKEAELTREALPPLVGSNCADDVDQVDVEELTYRAGAGVVETPRNALKVTPQERDQLIGAYLILSPQTVLKSEKLTPIHPLAEQVTIMTHSGRSGRYPVDRYDGRVLVPTGAAIPVSEFQALSESATMVYNEREFINRKLHHIALYGPALNTDEENYEKVRAERAEAEYVFDVDKRTCVKREDASGLVLVGDLINPPFHEFAYEGLKIRPATPFQTTVIGVFGVPGSGKSAIIKSVVTTRDLVASGKKENCQEIVNDVKKQRGLDVTARTVDSILLNGCRRGVENLYVDEAFACHSGTLLALIAMVKPTGKVILCGDPKQCGFFNLMQLKVNFNHDICTQVLHKSISRRCTLPITAIVSTLHYQGKMRTTNLCSAPIQIDTTGTTKPAKGDIVLTCFRXWVKQLQIDYRGHEVMTAAASQGLTRKGVYAVRQKVNENPLYAPSSEHVNVLLTRTENRLVWKTLSGDPWIKVLTNIPKGDFSATLEEWQEEHDNIMNALRERSTAVDPFQNKAKVCWAKCLVQVLETAGIRMTAEEWDTVLAFREDRAYSPEVALNEICTKYYGVDLDSGLFSAQSVSLYYENNHWDNRPGGRMYGFNREVARKFEQRYPFLRGKMDSGLQVNVPERKVQPFNAECNILLLNRRLPHALVTSYQQCRGERVEWLLKKLPGYHLLLVSEYNLALPHKRVFWIAPPHVSGADRIYDLDLGLPLNAGRYDLVFVNIHTEYRTHHYQQCVDHSMKLQMLGGDSLHLLXPGGSLLIRAYGYADRVSEMVVTALARKFSAFRVLRPACVTSNTEVFLLFTNFDNGRRAVTLHQANQRLSSMFACNGLHTAGCAPSYRVRRTDISGHAEEAVVNAANAKGTVGVGVCRAVARKWPDSFKGAATPVGTAKLVQANGMNVIHAVGPNFSTVTEAEGDRELAAAYRAVAGIINASNIKSVAIPLLSTGVFSGGKDRVMQSLNHLFTAMDTTDADVVIYCRDKAWEKKIQEAIDRRTAVELVSEDISLESDLIRVHPDSCLVGRKGYSITDGKLHSYLEGTRFHQTAVDMAEISTLWPKLQDANEQICLYALGESMDSIRTKCPVEDADSSTPPKTVPCLCRYAMTAERVARLRMNNTKAIIVCSSFPLPKYRIEGVQKVKCDRVLIFDQTVPSLVSPRKYIPAAASMHADTVSLDSTVSTGSAWSFPSEATYETMEVVAEVHHSEPPVPPPRRRRAQVTMHHQELLEVSDMHTPIAARVEIPVYDTAVVAERVAIPCTSEYATPIPTPRAVRVVPVPAPRIQRASTYRVSPTPTPRVLRASVCSVTTSAGVEFPWAPEDLEVLTEPVHCEMREPVELPWEPEDVDIQFGDFETPDKIQFGDIDFDQFXLSRAGAYIFSSDTGPGHLQQKSVRQHALPCEMLYAHEEERTYPPALDEAREKLLQAKMQMAPTEANKSRYQSRKVENMKAVIIDRLKDGARTYLAEQSEKIPTYASKYPRPVYSPSVEDSLQSPEVAVAACNAFLEANYPTVASYQITDEYDAYLDMVDGSESCLDRATFCPAKLRCYPKHHAYHQPQVRSAVPSPFQNTLQNVLAAATKRNCNVTQMRELPTLDSAVFNVECFKKFACNGEYWQEFKDDPIRITTENITTYVTRLKGPKAAALFAKTHNLVPLQEVPMDRFVVDMKRDVKVTPGTKHTEERPKVQVIQAAEPLATAYLCGIHRELVRRLKAVLAPNIHTLFDMSAEDFDAIIAAHFQPGDAVLETDIASFDKSQDDSLALTALMLLEDLGVDQELLDLIEEAFGEITSVHLPTGTRFKFGAMMKSGMFLTLFINTLLNIVIACRVLREKLTNSICAAFIGDDNIVHGVRSDPLMAERCASWVNMEVKIIDATMCEKPPYFCGGFILYDNVTGSACRVADPLKRLFKLGKPLPAGDTQDEDRRRALKDETDRWARVGLKSELEIALSSRYEVNGTGNIVRAMATLAKSLKNFKKLRGPIVHLYGGPK.

The region spanning 27-257 (ESQQVTPNDH…ESRRLLKSWH (231 aa)) is the Alphavirus-like MT domain. The interval 242-261 (GXTLYIESRRLLKSWHLPSV) is nsP1 membrane-binding. S-palmitoyl cysteine; by host attachment occurs at residues cysteine 415 and cysteine 417. The interval 480 to 506 (YSGDRNEAREAEKEAEETKEAELTREA) is disordered. The span at 483-504 (DRNEAREAEKEAEETKEAELTR) shows a compositional bias: basic and acidic residues. The (+)RNA virus helicase ATP-binding domain maps to 688–840 (DLINPPFHEF…HDICTQVLHK (153 aa)). 719–726 (GVPGSGKS) contributes to the a ribonucleoside 5'-triphosphate binding site. In terms of domain architecture, (+)RNA virus helicase C-terminal spans 841–989 (SISRRCTLPI…LEEWQEEHDN (149 aa)). The 323-residue stretch at 1002 to 1324 (DPFQNKAKVC…QRLSSMFACN (323 aa)) folds into the Peptidase C9 domain. Residues 1003-1022 (PFQNKAKVCWAKCLVQVLET) are nucleolus localization signal. The active-site For cysteine protease nsP2 activity is cysteine 1011. A Nuclear export signal motif is present at residues 1055–1064 (TKYYGVDLDS). Residue histidine 1080 is the For cysteine protease nsP2 activity of the active site. A Nuclear localization signal motif is present at residues 1179–1183 (PHKRV). One can recognise a Macro domain in the interval 1332 to 1491 (APSYRVRRTD…KIQEAIDRRT (160 aa)). ADP-D-ribose contacts are provided by aspartate 1341, asparagine 1355, glycine 1363, glycine 1443, valine 1444, and phenylalanine 1445. Cysteine 1593, cysteine 1595, cysteine 1618, and cysteine 1636 together coordinate Zn(2+). At threonine 1675 the chain carries Phosphothreonine; by host. 2 short sequence motifs (FGDF; binding to host G3BP1) span residues 1843–1846 (FGDF) and 1854–1857 (FGDI). Residues 2234 to 2349 (DAVLETDIAS…HGVRSDPLMA (116 aa)) form the RdRp catalytic domain.

Interacts with non-structural protein 3. Interacts with RNA-directed RNA polymerase nsP4. Interacts with protease nsP2. interacts with itself. As to quaternary structure, interacts with mRNA-capping enzyme nsP1. Interacts with host DDX1. Interacts with host DDX3. Interacts (via C-terminus) with host G3BP1; this interaction inhibits the formation of host stress granules on viral mRNAs and the nsp3-G3BP1 complexes bind viral RNAs and probably orchestrate the assembly of viral replication complexes. Interacts (via C-terminus) with host G3BP2; this interaction inhibits the formation of host stress granules on viral mRNAs and the nsp3-G3BP2 complexes bind viral RNAs and probably orchestrate the assembly of viral replication complexes. In terms of assembly, interacts with mRNA-capping enzyme nsP1. Interacts with protease nsP2. interacts with itself. Interacts with RNA-directed RNA polymerase nsP4. Interacts with mRNA-capping enzyme nsP1. Interacts with KPNA1/karyopherin-alpha1; this interaction probably allows the active transport of protease nsP2 into the host nucleus. Mg(2+) is required as a cofactor. Mn(2+) serves as cofactor. In terms of processing, specific enzymatic cleavages in vivo yield mature proteins. The processing of the polyprotein is temporally regulated. In early stages (1.7 hpi), P1234 is first cleaved in trans through its nsP2 protease activity, releasing P123' and nsP4, which associate to form the early replication complex. At the same time, P1234 is also cut at the nsP1/nsP2 site early in infection but with lower efficiency. After replication of the viral minus-strand RNAs (4 hpi), the polyproteins are cut at the nsP1/nsP2 and nsP2/nsP3 sites very efficiently, preventing accumulation of P123' and P1234 and allowing the formation of the late replication complex. NsP3'/nsP4 site is not cleaved anymore and P34 is produced rather than nsP4. Post-translationally, specific enzymatic cleavages in vivo yield mature proteins. The processing of the polyprotein is temporally regulated. In early stages (1.7 hpi), P123 is cleaved at the nsP1/nsP2 site with low efficiency. After replication of the viral minus-strand RNAs (4 hpi), the polyproteins are cut at the nsP1/nsP2 and nsP2/nsP3 sites very efficiently, preventing accumulation of P123 and allowing the formation of the late replication complex. Specific enzymatic cleavages in vivo yield mature proteins. The processing of the polyprotein is temporally regulated. In early stages (1.7 hpi), P123' is cleaved at the nsP1/nsP2 site with low efficiency. After replication of the viral minus-strand RNAs (4 hpi), the polyproteins are cut at the nsP1/nsP2 and nsP2/nsP3 sites very efficiently, preventing accumulation of P123' and allowing the formation of the late replication complex. In terms of processing, palmitoylated by host palmitoyltransferases ZDHHC2 and ZDHHC19. Post-translationally, phosphorylated by host on serines and threonines. Ubiquitinated; targets the protein for rapid degradation via the ubiquitin system. Nsp4 is present in extremely low quantities due to low frequency of translation through the amber stop-codon and the degradation by the ubiquitin pathway.

The protein localises to the host cytoplasmic vesicle membrane. Its subcellular location is the host cell membrane. It is found in the host cell projection. The protein resides in the host filopodium. It localises to the host nucleus. The protein localises to the host cytoplasm. The enzyme catalyses GTP + S-adenosyl-L-methionine = N(7)-methyl-GTP + S-adenosyl-L-homocysteine. It carries out the reaction N(7)-methyl-GTP + L-histidyl-[protein] = N(tele)-(N(7)-methylguanosine 5'-phospho)-L-histidyl-[protein] + diphosphate. The catalysed reaction is N(tele)-(N(7)-methylguanosine 5'-phospho)-L-histidyl-[protein] + a 5'-end diphospho-(purine-ribonucleoside) in mRNA + H(+) = a 5'-end (N(7)-methyl 5'-triphosphoguanosine)-(purine-ribonucleoside) in mRNA + L-histidyl-[protein]. It catalyses the reaction a 5'-end triphospho-ribonucleoside in mRNA + H2O = a 5'-end diphospho-ribonucleoside in mRNA + phosphate + H(+). The enzyme catalyses a ribonucleoside 5'-triphosphate + H2O = a ribonucleoside 5'-diphosphate + phosphate + H(+). It carries out the reaction ATP + H2O = ADP + phosphate + H(+). The catalysed reaction is RNA(n) + a ribonucleoside 5'-triphosphate = RNA(n+1) + diphosphate. It catalyses the reaction 4-O-(ADP-D-ribosyl)-L-aspartyl-[protein] + H2O = L-aspartyl-[protein] + ADP-D-ribose + H(+). The enzyme catalyses 5-O-(ADP-D-ribosyl)-L-glutamyl-[protein] + H2O = L-glutamyl-[protein] + ADP-D-ribose + H(+). It carries out the reaction RNA(n) + ATP = RNA(n)-3'-adenine ribonucleotide + diphosphate. The catalysed reaction is ADP-alpha-D-ribose 1''-phosphate + H2O = ADP-D-ribose + phosphate. Inactive precursor of the viral replicase, which is activated by cleavages carried out by the viral protease nsP2. Its function is as follows. The early replication complex formed by the polyprotein P123 and nsP4 synthesizes minus-strand RNAs. As soon P123 is cleaved into mature proteins, the plus-strand RNAs synthesis begins. In terms of biological role, the early replication complex formed by the polyprotein P123' and nsP4 synthesizes minus-strand RNAs. Polyprotein P123' is a short-lived polyprotein that accumulates during early stage of infection. As soon P123' is cleaved into mature proteins, the plus-strand RNAs synthesis begins. Functionally, cytoplasmic capping enzyme that catalyzes two virus-specific reactions: methyltransferase and nsP1 guanylyltransferase. mRNA-capping is necessary since all viral RNAs are synthesized in the cytoplasm, and host capping enzymes are restricted to the nucleus. The enzymatic reaction involves a covalent link between 7-methyl-GMP and nsP1, whereas eukaryotic capping enzymes form a covalent complex only with GMP. nsP1 capping consists in the following reactions: GTP is first methylated into 7-methyl-GMP and then is covalently linked to nsP1 to form the m7GMp-nsP1 complex from which 7-methyl-GMP complex is transferred to the mRNA to create the cap structure. NsP1 is also needed for the initiation of the minus-strand RNAs synthesis. Probably serves as a membrane anchor for the replication complex composed of nsP1-nsP4. Palmitoylated nsP1 is remodeling host cell cytoskeleton, and induces filopodium-like structure formation at the surface of the host cell. Multifunctional protein whose N-terminus is part of the RNA polymerase complex and displays NTPase, RNA triphosphatase and helicase activities. NTPase and RNA triphosphatase are involved in viral RNA capping and helicase keeps a check on the dsRNA replication intermediates. The C-terminus harbors a protease that specifically cleaves the polyproteins and releases the mature proteins. Required for the shutoff of minus-strand RNAs synthesis. Specifically inhibits the host IFN response by promoting the nuclear export of host STAT1. Also inhibits host transcription by inducing the rapid proteasome-dependent degradation of POLR2A, a catalytic subunit of the RNAPII complex. The resulting inhibition of cellular protein synthesis serves to ensure maximal viral gene expression and to evade host immune response. Its function is as follows. Seems to be essential for minus-strand RNAs and subgenomic 26S mRNAs synthesis. Displays mono-ADP-ribosylhydrolase activity. ADP-ribosylation is a post-translational modification that controls various processes of the host cell and the virus probably needs to revert it for optimal viral replication. Binds proteins of FXR family and sequesters them into the viral RNA replication complexes thereby inhibiting the formation of host stress granules on viral mRNAs. The nsp3'-FXR complexes bind viral RNAs and probably orchestrate the assembly of viral replication complexes, thanks to the ability of FXR family members to self-assemble and bind DNA. In terms of biological role, seems to be essential for minus-strand RNAs and subgenomic 26S mRNAs synthesis. Displays mono-ADP-ribosylhydrolase activity. ADP-ribosylation is a post-translational modification that controls various processes of the host cell and the virus probably needs to revert it for optimal viral replication. Binds proteins of G3BP family and sequesters them into the viral RNA replication complexes thereby inhibiting the formation of host stress granules on viral mRNAs. The nsp3-G3BP complexes bind viral RNAs and probably orchestrate the assembly of viral replication complexes, thanks to the ability of G3BP family members to self-assemble and bind DNA. Functionally, RNA dependent RNA polymerase. Replicates genomic and antigenomic RNA by recognizing replications specific signals. The early replication complex formed by the polyprotein P123 and nsP4 synthesizes minus-strand RNAs. The late replication complex composed of fully processed nsP1-nsP4 is responsible for the production of genomic and subgenomic plus-strand RNAs. The sequence is that of Polyprotein P1234 from Aedes (Common banded mosquito).